The primary structure comprises 249 residues: Methyl-coenzyme M reductase I subunit gamma (249 aa).

Position 120 (Arg-120) interacts with coenzyme M.

Belongs to the methyl-coenzyme M reductase gamma subunit family. In terms of assembly, MCR is a hexamer of two alpha, two beta, and two gamma chains, forming a dimer of heterotrimers. It depends on coenzyme F430 as a cofactor.

The protein localises to the cytoplasm. The catalysed reaction is coenzyme B + methyl-coenzyme M = methane + coenzyme M-coenzyme B heterodisulfide. It functions in the pathway one-carbon metabolism; methyl-coenzyme M reduction; methane from methyl-coenzyme M: step 1/1. Functionally, component of the methyl-coenzyme M reductase (MCR) I that catalyzes the reductive cleavage of methyl-coenzyme M (CoM-S-CH3 or 2-(methylthio)ethanesulfonate) using coenzyme B (CoB or 7-mercaptoheptanoylthreonine phosphate) as reductant which results in the production of methane and the mixed heterodisulfide of CoB and CoM (CoM-S-S-CoB). This is the final step in methanogenesis. This Methanothermobacter thermautotrophicus (strain ATCC 29096 / DSM 1053 / JCM 10044 / NBRC 100330 / Delta H) (Methanobacterium thermoautotrophicum) protein is Methyl-coenzyme M reductase I subunit gamma (mcrG).